The primary structure comprises 491 residues: Iota-carrageenase (491 aa).

An N-terminal signal peptide occupies residues 1-23 (MRLYFRKLWLTNLFLGGALASSA). Disulfide bonds link C269–C298, C336–C360, C408–C476, and C412–C484.

The protein belongs to the glycosyl hydrolase 82 family.

It is found in the secreted. The catalysed reaction is Endohydrolysis of 1,4-beta-D-linkages between D-galactose 4-sulfate and 3,6-anhydro-D-galactose-2-sulfate in iota-carrageenans.. Functionally, hydrolyzes iota-carrageenans, sulfated 1,3-alpha-1,4-beta galactans from red algal cell walls, with an inversion of anomeric configuration. Also active against hybrid iota-/nu-carrageenan, not active against kappa- or lambda-carrageenans. In Alteromonas macleodii (Pseudoalteromonas macleodii), this protein is Iota-carrageenase.